The primary structure comprises 217 residues: Uracil-DNA glycosylase (217 aa).

Residue Asp-62 is the Proton acceptor of the active site.

It belongs to the uracil-DNA glycosylase (UDG) superfamily. UNG family.

Its subcellular location is the cytoplasm. The catalysed reaction is Hydrolyzes single-stranded DNA or mismatched double-stranded DNA and polynucleotides, releasing free uracil.. Excises uracil residues from the DNA which can arise as a result of misincorporation of dUMP residues by DNA polymerase or due to deamination of cytosine. In Streptococcus pyogenes serotype M6 (strain ATCC BAA-946 / MGAS10394), this protein is Uracil-DNA glycosylase.